The primary structure comprises 176 residues: MDLPGPIHDFLLVFLGSGLLVGGLGVVLLPNPIFSAFSLGFVLFCISLLYILSNSHFVAAAQLLIYVGAINVLIIFAVMFMNDSEYSTDFNLWTVGNGITSLVCTTILFSLLSTILDTSWYGVIWTTRLNQILEQDLISNSQQIGIHLSTDFFLPFELISIILLVALIGAISVARQ.

Transmembrane regions (helical) follow at residues 10-30, 32-52, 61-81, 92-112, and 152-172; these read FLLV…VLLP, PIFS…LYIL, AQLL…VMFM, LWTV…FSLL, and FFLP…GAIS.

Belongs to the complex I subunit 6 family. As to quaternary structure, NDH is composed of at least 16 different subunits, 5 of which are encoded in the nucleus.

The protein localises to the plastid. The protein resides in the chloroplast thylakoid membrane. The enzyme catalyses a plastoquinone + NADH + (n+1) H(+)(in) = a plastoquinol + NAD(+) + n H(+)(out). It carries out the reaction a plastoquinone + NADPH + (n+1) H(+)(in) = a plastoquinol + NADP(+) + n H(+)(out). Its function is as follows. NDH shuttles electrons from NAD(P)H:plastoquinone, via FMN and iron-sulfur (Fe-S) centers, to quinones in the photosynthetic chain and possibly in a chloroplast respiratory chain. The immediate electron acceptor for the enzyme in this species is believed to be plastoquinone. Couples the redox reaction to proton translocation, and thus conserves the redox energy in a proton gradient. The chain is NAD(P)H-quinone oxidoreductase subunit 6, chloroplastic (ndhG) from Lepidium virginicum (Virginia pepperweed).